A 345-amino-acid polypeptide reads, in one-letter code: Selenide, water dikinase (345 aa).

The active site involves cysteine 15. Residues lysine 18 and 46-48 (SKD) each bind ATP. Residue aspartate 49 participates in Mg(2+) binding. ATP-binding positions include aspartate 66, aspartate 89, and 137 to 139 (GHS). Aspartate 89 serves as a coordination point for Mg(2+). Residue aspartate 225 participates in Mg(2+) binding.

It belongs to the selenophosphate synthase 1 family. Class I subfamily. As to quaternary structure, homodimer. Mg(2+) serves as cofactor.

The catalysed reaction is hydrogenselenide + ATP + H2O = selenophosphate + AMP + phosphate + 2 H(+). Functionally, synthesizes selenophosphate from selenide and ATP. This chain is Selenide, water dikinase, found in Aeromonas salmonicida (strain A449).